The primary structure comprises 430 residues: tRNA(Ile)-lysidine synthase (430 aa).

Residue Ser-21 to Ser-26 coordinates ATP.

Belongs to the tRNA(Ile)-lysidine synthase family.

The protein resides in the cytoplasm. The enzyme catalyses cytidine(34) in tRNA(Ile2) + L-lysine + ATP = lysidine(34) in tRNA(Ile2) + AMP + diphosphate + H(+). Functionally, ligates lysine onto the cytidine present at position 34 of the AUA codon-specific tRNA(Ile) that contains the anticodon CAU, in an ATP-dependent manner. Cytidine is converted to lysidine, thus changing the amino acid specificity of the tRNA from methionine to isoleucine. This is tRNA(Ile)-lysidine synthase from Salmonella typhi.